The chain runs to 280 residues: Undecaprenyl-diphosphatase (280 aa).

8 helical membrane passes run 3–23 (IILLIQAVIMGIVEGITEFLP), 45–65 (VDLFVVVVQFGAILAVIYDYW), 88–108 (QLGLSLIVATIPVMIVGFTFA), 115–135 (LFDPIVVAIMLIIGGLLIFYV), 150–170 (VGLKTALMIGLFQCLALIPGT), 191–211 (AEFSFFLGIPVIVGAALLDLL), 225–245 (VLGIGTVVSFIVALLCIRLLV), and 255–275 (IFAWLRIITGVLVLIAAWGFG).

Belongs to the UppP family.

Its subcellular location is the cell inner membrane. It catalyses the reaction di-trans,octa-cis-undecaprenyl diphosphate + H2O = di-trans,octa-cis-undecaprenyl phosphate + phosphate + H(+). Its function is as follows. Catalyzes the dephosphorylation of undecaprenyl diphosphate (UPP). Confers resistance to bacitracin. The chain is Undecaprenyl-diphosphatase from Psychrobacter arcticus (strain DSM 17307 / VKM B-2377 / 273-4).